Consider the following 184-residue polypeptide: MAAKKSTPTDSGKSKGKKNKAQKGAGQKGAGQIVVATNRKARHDYHIIDTYECGVVLVGTEVKSLREGKASLVDAYATIDEGEVWLRGLHIPEYSMGHWTNHSPRRTRKLLLHRREIDSLMGKVRDGNNTLVPLQLYFVAGKLKVELALARGKQEYDKRQDIKRRTEEREITREMGRRIKGIQG.

The segment covering 1–11 (MAAKKSTPTDS) has biased composition (polar residues). Positions 1 to 31 (MAAKKSTPTDSGKSKGKKNKAQKGAGQKGAG) are disordered.

It belongs to the SmpB family.

The protein localises to the cytoplasm. Functionally, required for rescue of stalled ribosomes mediated by trans-translation. Binds to transfer-messenger RNA (tmRNA), required for stable association of tmRNA with ribosomes. tmRNA and SmpB together mimic tRNA shape, replacing the anticodon stem-loop with SmpB. tmRNA is encoded by the ssrA gene; the 2 termini fold to resemble tRNA(Ala) and it encodes a 'tag peptide', a short internal open reading frame. During trans-translation Ala-aminoacylated tmRNA acts like a tRNA, entering the A-site of stalled ribosomes, displacing the stalled mRNA. The ribosome then switches to translate the ORF on the tmRNA; the nascent peptide is terminated with the 'tag peptide' encoded by the tmRNA and targeted for degradation. The ribosome is freed to recommence translation, which seems to be the essential function of trans-translation. The polypeptide is SsrA-binding protein (Corynebacterium jeikeium (strain K411)).